The sequence spans 795 residues: Multiple C2 domain and transmembrane region protein 12 (795 aa).

3 C2 domains span residues 24-142 (RNPR…PQWY), 180-298 (VCAS…SAPA), and 341-463 (YSSD…TCSY). Residues N57, D109, and N113 each coordinate Ca(2+). The next 4 helical transmembrane spans lie at 590-610 (CTPK…EYYI), 612-632 (WLVT…VILL), 730-750 (FVLI…CLGW), and 752-772 (LHVR…LPWF).

Belongs to the MCTP family. Ca(2+) is required as a cofactor. As to expression, expressed in root vascular tissues and meristems. Observed in flowers.

The protein resides in the endoplasmic reticulum membrane. May function as a signaling molecule by regulating the trafficking of other regulators. The sequence is that of Multiple C2 domain and transmembrane region protein 12 from Arabidopsis thaliana (Mouse-ear cress).